The following is a 481-amino-acid chain: 2-succinylbenzoate--CoA ligase (481 aa).

This sequence belongs to the ATP-dependent AMP-binding enzyme family. MenE subfamily.

It catalyses the reaction 2-succinylbenzoate + ATP + CoA = 2-succinylbenzoyl-CoA + AMP + diphosphate. The protein operates within quinol/quinone metabolism; 1,4-dihydroxy-2-naphthoate biosynthesis; 1,4-dihydroxy-2-naphthoate from chorismate: step 5/7. Its pathway is quinol/quinone metabolism; menaquinone biosynthesis. Converts 2-succinylbenzoate (OSB) to 2-succinylbenzoyl-CoA (OSB-CoA). This is 2-succinylbenzoate--CoA ligase from Bacillus cereus (strain ATCC 10987 / NRS 248).